The chain runs to 101 residues: Apolipoprotein C-II (101 aa).

Residues 1–22 form the signal peptide; it reads MGIRYLLVLVLVLLVLGCEVQG. Residues 23–28 constitute a propeptide that is removed on maturation; that stretch reads AHMPQQ. The segment at 66–74 is lipid binding; that stretch reads TMDEKIREI. Residues 78-101 are lipoprotein lipase cofactor; it reads STAAVSTYAGIFTDQLLSMLKGDQ.

This sequence belongs to the apolipoprotein C2 family. In terms of processing, proapolipoprotein C-II is synthesized as a sialic acid containing glycoprotein which is subsequently desialylated prior to its proteolytic processing. Proapolipoprotein C-II, the major form found in plasma undergoes proteolytic cleavage of its N-terminal hexapeptide to generate apolipoprotein C-II, which occurs as the minor form in plasma.

It is found in the secreted. Its function is as follows. Component of chylomicrons, very low-density lipoproteins (VLDL), low-density lipoproteins (LDL), and high-density lipoproteins (HDL) in plasma. Plays an important role in lipoprotein metabolism as an activator of lipoprotein lipase. Both proapolipoprotein C-II and apolipoprotein C-II can activate lipoprotein lipase. The protein is Apolipoprotein C-II (APOC2) of Neomonachus schauinslandi (Hawaiian monk seal).